The sequence spans 125 residues: Somatostatin-2 (125 aa).

The signal sequence occupies residues 1 to 24; it reads MQCIRCPAILALLALVLCGPSVSS. Glutamine 25 is modified (pyrrolidone carboxylic acid). The propeptide occupies 25–97; the sequence is QLDREQSDNQ…ATGGRMNLER (73 aa). Residues 82–107 are disordered; the sequence is AEDASMATGGRMNLERSVDSTNNLPP. Cysteines 114 and 125 form a disulfide. Lysine 120 carries the 5-hydroxylysine modification.

The protein belongs to the somatostatin family.

The protein localises to the secreted. In terms of biological role, somatostatin inhibits the release of somatotropin. The polypeptide is Somatostatin-2 (sst2) (Lophius americanus (American angler)).